A 121-amino-acid polypeptide reads, in one-letter code: Large ribosomal subunit protein mL52 (121 aa).

A mitochondrion-targeting transit peptide spans 1-22 (MAALGTWLSSVRRLHCSVVARA). The span at 98–109 (QEERKKEHDLKP) shows a compositional bias: basic and acidic residues. Residues 98–121 (QEERKKEHDLKPKGTLLRSPLPNQ) are disordered.

The protein belongs to the mitochondrion-specific ribosomal protein mL52 family. Component of the mitochondrial ribosome large subunit (39S) which comprises a 16S rRNA and about 50 distinct proteins.

The protein resides in the mitochondrion. This Mus musculus (Mouse) protein is Large ribosomal subunit protein mL52 (Mrpl52).